The chain runs to 138 residues: uncharacterized protein (138 aa).

2 disordered regions span residues 1–23 and 35–83; these read MPESAPSTPPSVNRRHEPEMLSE and ASPS…EDPV. The span at 60 to 69 shows a compositional bias: acidic residues; sequence DEETIPEEDD.

This is an uncharacterized protein from Schizosaccharomyces pombe (strain 972 / ATCC 24843) (Fission yeast).